The following is a 26-amino-acid chain: KCCKKGGPRKCPPEGMTXFYERIFRI.

Post-translationally, glycosylated. Produced by the opercular gland in the gill cavity and secreted as part of the mucus cocoon.

It localises to the secreted. Exhibits antibacterial activity. May play a role in protection against parasite settlement. This Scarus vetula (Queen parrotfish) protein is Mucus envelope protein.